A 97-amino-acid chain; its full sequence is Co-chaperonin GroES (97 aa).

It belongs to the GroES chaperonin family. As to quaternary structure, heptamer of 7 subunits arranged in a ring. Interacts with the chaperonin GroEL.

It is found in the cytoplasm. Together with the chaperonin GroEL, plays an essential role in assisting protein folding. The GroEL-GroES system forms a nano-cage that allows encapsulation of the non-native substrate proteins and provides a physical environment optimized to promote and accelerate protein folding. GroES binds to the apical surface of the GroEL ring, thereby capping the opening of the GroEL channel. This is Co-chaperonin GroES from Buchnera aphidicola subsp. Tuberolachnus salignus.